A 103-amino-acid polypeptide reads, in one-letter code: Co-chaperonin GroES (103 aa).

The protein belongs to the GroES chaperonin family. As to quaternary structure, heptamer of 7 subunits arranged in a ring. Interacts with the chaperonin GroEL.

It localises to the cytoplasm. Its function is as follows. Together with the chaperonin GroEL, plays an essential role in assisting protein folding. The GroEL-GroES system forms a nano-cage that allows encapsulation of the non-native substrate proteins and provides a physical environment optimized to promote and accelerate protein folding. GroES binds to the apical surface of the GroEL ring, thereby capping the opening of the GroEL channel. This Prochlorococcus marinus (strain MIT 9312) protein is Co-chaperonin GroES.